The sequence spans 371 residues: tRNA-specific 2-thiouridylase MnmA (371 aa).

ATP is bound by residues 13–20 (GMSGGVDS) and Met39. Residues 99–101 (NPD) form an interaction with target base in tRNA region. Cys104 functions as the Nucleophile in the catalytic mechanism. Cys104 and Cys200 are oxidised to a cystine. Residue Gly128 coordinates ATP. The segment at 150-152 (KDQ) is interaction with tRNA. Catalysis depends on Cys200, which acts as the Cysteine persulfide intermediate. Positions 308-309 (RY) are interaction with tRNA.

It belongs to the MnmA/TRMU family.

The protein resides in the cytoplasm. It carries out the reaction S-sulfanyl-L-cysteinyl-[protein] + uridine(34) in tRNA + AH2 + ATP = 2-thiouridine(34) in tRNA + L-cysteinyl-[protein] + A + AMP + diphosphate + H(+). In terms of biological role, catalyzes the 2-thiolation of uridine at the wobble position (U34) of tRNA, leading to the formation of s(2)U34. In Listeria monocytogenes serovar 1/2a (strain ATCC BAA-679 / EGD-e), this protein is tRNA-specific 2-thiouridylase MnmA.